Consider the following 207-residue polypeptide: Large ribosomal subunit protein uL4 (207 aa).

The span at arginine 44–arginine 58 shows a compositional bias: basic and acidic residues. The tract at residues arginine 44–phenylalanine 82 is disordered.

This sequence belongs to the universal ribosomal protein uL4 family. As to quaternary structure, part of the 50S ribosomal subunit.

One of the primary rRNA binding proteins, this protein initially binds near the 5'-end of the 23S rRNA. It is important during the early stages of 50S assembly. It makes multiple contacts with different domains of the 23S rRNA in the assembled 50S subunit and ribosome. In terms of biological role, forms part of the polypeptide exit tunnel. The polypeptide is Large ribosomal subunit protein uL4 (Zymomonas mobilis subsp. mobilis (strain ATCC 31821 / ZM4 / CP4)).